Consider the following 55-residue polypeptide: U-reduvitoxin-Pr2a (55 aa).

Positions 1-21 are cleaved as a signal peptide; the sequence is MMKFLLVLFLITITLITMAYS. 3 cysteine pairs are disulfide-bonded: Cys-26–Cys-41, Cys-33–Cys-46, and Cys-40–Cys-51.

It belongs to the venom Ptu1-like knottin family. Expressed by the venom gland (posterior main gland) (at protein level).

It localises to the secreted. In terms of biological role, binds reversibly and blocks P/Q-type voltage-gated calcium channels (Cav). In Platymeris rhadamanthus (Red spot assassin bug), this protein is U-reduvitoxin-Pr2a.